Here is a 156-residue protein sequence, read N- to C-terminus: uncharacterized protein (156 aa).

To L.lactis TrpF C-terminal region.

This is an uncharacterized protein from Bacillus subtilis (strain 168).